The chain runs to 417 residues: Serine--tRNA ligase (417 aa).

An L-serine-binding site is contributed by 232–234; the sequence is TAE. 263-265 is a binding site for ATP; that stretch reads RKE. Glutamate 286 serves as a coordination point for L-serine. 350–353 is an ATP binding site; sequence EISS. Residue serine 385 participates in L-serine binding.

It belongs to the class-II aminoacyl-tRNA synthetase family. Type-1 seryl-tRNA synthetase subfamily. Homodimer. The tRNA molecule binds across the dimer.

It is found in the cytoplasm. It catalyses the reaction tRNA(Ser) + L-serine + ATP = L-seryl-tRNA(Ser) + AMP + diphosphate + H(+). The enzyme catalyses tRNA(Sec) + L-serine + ATP = L-seryl-tRNA(Sec) + AMP + diphosphate + H(+). The protein operates within aminoacyl-tRNA biosynthesis; selenocysteinyl-tRNA(Sec) biosynthesis; L-seryl-tRNA(Sec) from L-serine and tRNA(Sec): step 1/1. Its function is as follows. Catalyzes the attachment of serine to tRNA(Ser). Is also able to aminoacylate tRNA(Sec) with serine, to form the misacylated tRNA L-seryl-tRNA(Sec), which will be further converted into selenocysteinyl-tRNA(Sec). This Sulfurihydrogenibium sp. (strain YO3AOP1) protein is Serine--tRNA ligase.